Consider the following 524-residue polypeptide: 2-isopropylmalate synthase (524 aa).

The 263-residue stretch at 5–267 folds into the Pyruvate carboxyltransferase domain; it reads VIIFDTTLRD…HTNINHQEIF (263 aa). The Mn(2+) site is built by D14, H202, H204, and N238. Residues 392-524 form a regulatory domain region; it reads SLDYFSVQSG…SKHQNNQETV (133 aa).

Belongs to the alpha-IPM synthase/homocitrate synthase family. LeuA type 1 subfamily. Homodimer. The cofactor is Mn(2+).

The protein resides in the cytoplasm. It catalyses the reaction 3-methyl-2-oxobutanoate + acetyl-CoA + H2O = (2S)-2-isopropylmalate + CoA + H(+). The protein operates within amino-acid biosynthesis; L-leucine biosynthesis; L-leucine from 3-methyl-2-oxobutanoate: step 1/4. In terms of biological role, catalyzes the condensation of the acetyl group of acetyl-CoA with 3-methyl-2-oxobutanoate (2-ketoisovalerate) to form 3-carboxy-3-hydroxy-4-methylpentanoate (2-isopropylmalate). This chain is 2-isopropylmalate synthase, found in Serratia proteamaculans (strain 568).